The chain runs to 522 residues: Solute carrier family 2, facilitated glucose transporter member 2 (522 aa).

The Cytoplasmic portion of the chain corresponds to 1–10 (MSEDKITGTL). A helical membrane pass occupies residues 11-31 (AFTVFTAVLGSFQFGYDIGVI). The Extracellular portion of the chain corresponds to 32-96 (NAPQEVIISH…SAHIVTMLWS (65 aa)). A glycan (N-linked (GlcNAc...) asparagine) is linked at N62. Residues 97 to 117 (LSVSSFAVGGMVASFFGGWLG) form a helical membrane-spanning segment. The Cytoplasmic portion of the chain corresponds to 118-125 (DKLGRIKA). A helical membrane pass occupies residues 126-146 (MLAANSLSLTGALLMGCSKFG). Residues 147-156 (PAHALIIAGR) are Extracellular-facing. The helical transmembrane segment at 157–177 (SVSGLYCGLISGLVPMYIGEI) threads the bilayer. Over 178–185 (APTTLRGA) the chain is Cytoplasmic. Residues 186–206 (LGTLHQLALVTGILISQIAGL) traverse the membrane as a helical segment. Q191 is a binding site for D-glucose. The Extracellular segment spans residues 207–215 (SFILGNQDY). Residues 216-236 (WHILLGLSAVPALLQCLLLLF) form a helical membrane-spanning segment. The Cytoplasmic segment spans residues 237-301 (CPESPRYLYL…LFTDPNYRQP (65 aa)). Residues 302 to 322 (IVVALMLHLAQQFSGINGIFY) form a helical membrane-spanning segment. Residues 312–313 (QQ) and N318 contribute to the D-glucose site. At 323–337 (YSTSIFQTAGISQPV) the chain is on the extracellular side. Residues 338–358 (YATIGVGAINMIFTAVSVLLV) form a helical membrane-spanning segment. N347 lines the D-glucose pocket. Residues 359–365 (EKAGRRT) lie on the Cytoplasmic side of the membrane. A helical membrane pass occupies residues 366–386 (LFLAGMIGMFFCAVFMSLGLV). At 387-401 (LLDKFTWMSYVSMTA) the chain is on the extracellular side. A helical membrane pass occupies residues 402-422 (IFLFVSFFEIGPGPIPWFMVA). E410 and W418 together coordinate D-glucose. At 423 to 431 (EFFSQGPRP) the chain is on the cytoplasmic side. The chain crosses the membrane as a helical span at residues 432-452 (TALALAAFSNWVCNFIIALCF). Topologically, residues 453-459 (QYIADFL) are extracellular. A helical membrane pass occupies residues 460-480 (GPYVFFLFAGVVLVFTLFTFF). The Cytoplasmic segment spans residues 481 to 522 (KVPETKGKSFDEIAAEFRKKSGSAPPRKATVQMEFLGSSETV). T521 bears the Phosphothreonine mark.

This sequence belongs to the major facilitator superfamily. Sugar transporter (TC 2.A.1.1) family. Glucose transporter subfamily. In terms of processing, N-glycosylated; required for stability and retention at the cell surface of pancreatic beta cells. As to expression, present in liver, intestine, kidney and beta-pancreatic islet cells.

Its subcellular location is the cell membrane. It carries out the reaction D-glucose(out) = D-glucose(in). It catalyses the reaction D-fructose(out) = D-fructose(in). The enzyme catalyses L-dehydroascorbate(out) = L-dehydroascorbate(in). The catalysed reaction is D-galactose(in) = D-galactose(out). With respect to regulation, D-glucose and maltose competitively inhibit fructose transport. D-glucose, D-fructose and maltose inhibit deoxyglucose transport. In terms of biological role, facilitative hexose transporter that mediates the transport of glucose, fructose and galactose. Likely mediates the bidirectional transfer of glucose across the plasma membrane of hepatocytes and is responsible for uptake of glucose by the beta cells; may comprise part of the glucose-sensing mechanism of the beta cell. May also participate with the Na(+)/glucose cotransporter in the transcellular transport of glucose in the small intestine and kidney. Also able to mediate the transport of dehydroascorbate. The polypeptide is Solute carrier family 2, facilitated glucose transporter member 2 (Rattus norvegicus (Rat)).